The following is a 382-amino-acid chain: Beta-1,4-galactosyltransferase 6 (382 aa).

Over M1–S14 the chain is Cytoplasmic. Residues L15–A35 form a helical; Signal-anchor for type II membrane protein membrane-spanning segment. Over P36 to Y382 the chain is Lumenal. N71, N75, N83, N84, N99, and N122 each carry an N-linked (GlcNAc...) asparagine glycan. A disulfide bridge connects residues C108 and C152. Residues P163–R167, F202–R204, V229–D230, Y258, and W290 contribute to the UDP-alpha-D-galactose site. A disulfide bridge connects residues C223 and C242. D230 provides a ligand contact to Mn(2+). G292–D295 contributes to the N-acetyl-D-glucosamine binding site. N307 is a glycosylation site (N-linked (GlcNAc...) asparagine). Residue H323 participates in Mn(2+) binding. Position 323-324 (H323–H324) interacts with UDP-alpha-D-galactose. R334 contacts N-acetyl-D-glucosamine. The N-linked (GlcNAc...) asparagine glycan is linked to N367.

It belongs to the glycosyltransferase 7 family. Mn(2+) is required as a cofactor. Mg(2+) serves as cofactor. In terms of tissue distribution, high expression in brain and adrenal gland, lower in liver, lung, colon and peripheral white blood cells.

It is found in the golgi apparatus. The protein localises to the golgi stack membrane. The catalysed reaction is a beta-D-glucosyl-(1&lt;-&gt;1')-N-acylsphing-4-enine + UDP-alpha-D-galactose = a beta-D-Gal-(1-&gt;4)-beta-D-Glc-(1&lt;-&gt;1)-Cer(d18:1(4E)) + UDP + H(+). It participates in protein modification; protein glycosylation. The protein operates within sphingolipid metabolism. Inhibited by EDTA. Functionally, catalyzes the synthesis of lactosylceramide (LacCer) via the transfer of galactose from UDP-galactose to glucosylceramide (GlcCer). LacCer is the starting point in the biosynthesis of all gangliosides (membrane-bound glycosphingolipids) which play pivotal roles in the CNS including neuronal maturation and axonal and myelin formation. The protein is Beta-1,4-galactosyltransferase 6 of Homo sapiens (Human).